A 505-amino-acid chain; its full sequence is L-carnitine/gamma-butyrobetaine antiporter (505 aa).

12 consecutive transmembrane segments (helical) span residues 10 to 30 (IEPK…WLTV), 51 to 71 (WGWA…WLVF), 92 to 112 (IFMM…SIEI), 143 to 163 (GPLP…FFFV), 195 to 215 (FYLV…TPLV), 231 to 251 (LDAI…ACGL), 263 to 283 (SYLS…SFIM), 316 to 336 (WTVF…IFLA), 347 to 367 (LCFG…TVLG), 403 to 423 (LSTA…VTLI), 446 to 466 (LLVR…LLAL), and 475 to 495 (AIIA…LSFI).

It belongs to the BCCT transporter (TC 2.A.15) family. CaiT subfamily. As to quaternary structure, homotrimer.

It localises to the cell inner membrane. The catalysed reaction is 4-(trimethylamino)butanoate(in) + (R)-carnitine(out) = 4-(trimethylamino)butanoate(out) + (R)-carnitine(in). The protein operates within amine and polyamine metabolism; carnitine metabolism. Catalyzes the exchange of L-carnitine for gamma-butyrobetaine. In Salmonella paratyphi A (strain ATCC 9150 / SARB42), this protein is L-carnitine/gamma-butyrobetaine antiporter.